The chain runs to 291 residues: Citrate lyase subunit beta (291 aa).

Substrate-binding residues include Arg66 and Glu129. Mg(2+) contacts are provided by Glu129 and Asp156.

Belongs to the HpcH/HpaI aldolase family. Citrate lyase beta subunit subfamily. In terms of assembly, oligomer with a subunit composition of (alpha,beta,gamma)6. Requires Mg(2+) as cofactor.

The protein resides in the cytoplasm. It carries out the reaction citrate = oxaloacetate + acetate. The enzyme catalyses (3S)-citryl-CoA = oxaloacetate + acetyl-CoA. Functionally, represents a citryl-ACP lyase. The protein is Citrate lyase subunit beta (citE) of Haemophilus influenzae (strain ATCC 51907 / DSM 11121 / KW20 / Rd).